The chain runs to 177 residues: Endothelin-2 (177 aa).

The signal sequence occupies residues 1–23; that stretch reads MPTALCSIALALLVALHEGKSQA. The propeptide occupies 24–45; that stretch reads ATTPIPEQPAPLPRARGSHLRT. Cystine bridges form between Cys-48–Cys-62 and Cys-50–Cys-58. A propeptide spanning residues 69 to 177 is cleaved from the precursor; that stretch reads VNTPGQTAPY…RPTHSRQRKR (109 aa). An endothelin-like region spans residues 95–110; that stretch reads CECYSARDPACATFCH. A disordered region spans residues 155-177; it reads HFARQQQKPTRETRPTHSRQRKR.

It belongs to the endothelin/sarafotoxin family. Expressed in various organs including heart, lung, liver, kidney, gastrointestinal tract, uterus and ovary, but not in spleen. Within the gastrointestinal tract, gene expression was detected in rumen, a ruminant-specific digestive organ, as well as stomach, duodenum and colon.

The protein localises to the secreted. Endothelins are endothelium-derived vasoconstrictor peptides. This Bos taurus (Bovine) protein is Endothelin-2 (EDN2).